A 554-amino-acid polypeptide reads, in one-letter code: Glutamine--tRNA ligase (554 aa).

The 'HIGH' region signature appears at 34–44 (PEPNGYLHIGH). ATP contacts are provided by residues 35–37 (EPN) and 41–47 (HIGHAKS). L-glutamine contacts are provided by Asp-67 and Tyr-212. Residues Thr-231, 261–262 (RL), and 269–271 (MSK) each bind ATP. A 'KMSKS' region motif is present at residues 268-272 (VMSKR). The segment at 317-324 (TKQDNTIE) is interaction with tRNA.

It belongs to the class-I aminoacyl-tRNA synthetase family. As to quaternary structure, monomer.

It is found in the cytoplasm. It catalyses the reaction tRNA(Gln) + L-glutamine + ATP = L-glutaminyl-tRNA(Gln) + AMP + diphosphate. In Shigella boydii serotype 18 (strain CDC 3083-94 / BS512), this protein is Glutamine--tRNA ligase.